The primary structure comprises 876 residues: Senescence-induced receptor-like serine/threonine-protein kinase (876 aa).

A signal peptide spans 1–24; that stretch reads MAMLKSLSSILFTSFALLFFLVHA. At 25–517 the chain is on the extracellular side; the sequence is QDQSGFISID…SNTKKKNKNG (493 aa). LRR repeat units lie at residues 415 to 438, 439 to 462, and 463 to 483; these read RVVSLNISFSELRGQIDPAFSNLT, SIRKLDLSGNTLTGEIPAFLANLP, and NLTELNVEGNKLTGIVPQRLH. Residues 518–538 form a helical membrane-spanning segment; it reads YIIPLVVVGIIVVLLTALALF. Over 539-876 the chain is Cytoplasmic; the sequence is RRFKKKQQRG…LDTEMVPRAR (338 aa). Residues 574 to 847 form the Protein kinase domain; sequence NNFERVIGKG…VVMELKQIVY (274 aa). ATP-binding positions include 580-588 and K601; that span reads IGKGGFGKV. Y646 is modified (phosphotyrosine). The Proton acceptor role is filled by D697. S731 carries the phosphoserine modification. A Phosphothreonine modification is found at T732. Y745 bears the Phosphotyrosine mark.

The protein belongs to the protein kinase superfamily. Ser/Thr protein kinase family.

It is found in the membrane. Its function is as follows. Involved in innate immune response of plants. This chain is Senescence-induced receptor-like serine/threonine-protein kinase (SIRK), found in Arabidopsis thaliana (Mouse-ear cress).